The sequence spans 202 residues: FMN-dependent NADH:quinone oxidoreductase (202 aa).

Residues S9 and 95–98 each bind FMN; that span reads MYNF.

This sequence belongs to the azoreductase type 1 family. In terms of assembly, homodimer. The cofactor is FMN.

The catalysed reaction is 2 a quinone + NADH + H(+) = 2 a 1,4-benzosemiquinone + NAD(+). The enzyme catalyses N,N-dimethyl-1,4-phenylenediamine + anthranilate + 2 NAD(+) = 2-(4-dimethylaminophenyl)diazenylbenzoate + 2 NADH + 2 H(+). Quinone reductase that provides resistance to thiol-specific stress caused by electrophilic quinones. In terms of biological role, also exhibits azoreductase activity. Catalyzes the reductive cleavage of the azo bond in aromatic azo compounds to the corresponding amines. The sequence is that of FMN-dependent NADH:quinone oxidoreductase from Chromobacterium violaceum (strain ATCC 12472 / DSM 30191 / JCM 1249 / CCUG 213 / NBRC 12614 / NCIMB 9131 / NCTC 9757 / MK).